Reading from the N-terminus, the 66-residue chain is Large ribosomal subunit protein bL35 (66 aa).

It belongs to the bacterial ribosomal protein bL35 family.

This Treponema pallidum (strain Nichols) protein is Large ribosomal subunit protein bL35.